We begin with the raw amino-acid sequence, 444 residues long: MTRSLHIVGAGMAGSEAAWQAAEMGVPVVLHEMRPRVGTFAHRTGQFAEMVCSNSFRSDDDERNAVGLLHWEMRAARGLIMEMASAHRLPAGGALAVDRDPFAESVTARLREHPLISVVDEELAELPSDGDWIIATGPLTSSSLAESIRAVTGAQSLAFFDAIAPIVYAESIDMSVAWRQSRYDKGETEDERTAYINCPMTRDQYEAFIDALLAAEKTEFHEGETAGYFDGCLPIEVMAERGRETLRHGPMKPVGLTNAHKPQDKAHAVVQLRRDNKLGTLYNIVGFQTKMKYGAQTSVFRMIPGLENASFARLGGIHRNTFLNSPTLLDDRMRLKLRPNIRFAGQVTGVEGYVESAAMGLLAGRMAAAEILGRDLPPPPPETAMGALITHITGGAEAKTFQPMNVNFGLFPPIDARGGRRGRKDRYKAYTHRAKAAFTEWLAA.

9-14 (GAGMAG) serves as a coordination point for FAD.

It belongs to the MnmG family. TrmFO subfamily. The cofactor is FAD.

It is found in the cytoplasm. It catalyses the reaction uridine(54) in tRNA + (6R)-5,10-methylene-5,6,7,8-tetrahydrofolate + NADH + H(+) = 5-methyluridine(54) in tRNA + (6S)-5,6,7,8-tetrahydrofolate + NAD(+). The catalysed reaction is uridine(54) in tRNA + (6R)-5,10-methylene-5,6,7,8-tetrahydrofolate + NADPH + H(+) = 5-methyluridine(54) in tRNA + (6S)-5,6,7,8-tetrahydrofolate + NADP(+). In terms of biological role, catalyzes the folate-dependent formation of 5-methyl-uridine at position 54 (M-5-U54) in all tRNAs. The sequence is that of Methylenetetrahydrofolate--tRNA-(uracil-5-)-methyltransferase TrmFO from Cereibacter sphaeroides (strain ATCC 17025 / ATH 2.4.3) (Rhodobacter sphaeroides).